Reading from the N-terminus, the 241-residue chain is MPLGLIGEKVGMTRVLLKDGTAIPVTVIKFPVNYVVQVKSQNTKDGYNALQIGAYEAKEKHLTKPLIGHFKKHGVPLLRRLWEFRVDNPEEFQSGQQLKVEDVFKPGDLVDVWGISKGRGFAGAMKRWDFAGFPKSHGHRYHRAVGAIGQRTDPGRVWKGKRMPGHYGAKPVRVQGLFVVDVLPEENAILVKGSVPGHNKGIVVVEQSTIAYRKSQKLKQKRYQFIIENLAKEESQEVAES.

The protein belongs to the universal ribosomal protein uL3 family. As to quaternary structure, part of the 50S ribosomal subunit. Forms a cluster with proteins L14 and L19.

Its function is as follows. One of the primary rRNA binding proteins, it binds directly near the 3'-end of the 23S rRNA, where it nucleates assembly of the 50S subunit. The sequence is that of Large ribosomal subunit protein uL3 from Aquifex aeolicus (strain VF5).